A 289-amino-acid polypeptide reads, in one-letter code: CRISPR system Cms protein Csm4 (289 aa).

It belongs to the CRISPR-associated Csm4 family. Probably part of the Csm effector complex, that includes Cas10, Csm2, Csm3, Csm4, Csm5 and mature crRNA. Interacts with Cas10 (csm1).

Its function is as follows. CRISPR (clustered regularly interspaced short palindromic repeat) is an adaptive immune system that provides protection against mobile genetic elements (viruses, transposable elements and conjugative plasmids). CRISPR clusters contain spacers, sequences complementary to antecedent mobile elements, and target invading nucleic acids. CRISPR clusters are transcribed and processed into CRISPR RNA (crRNA). The type III-A Csm effector complex binds crRNA and acts as a crRNA-guided RNase, DNase and cyclic oligoadenylate synthase; binding of target RNA cognate to the crRNA is required for all activities. Functionally, the subunit probably binds to the 5' handle of the crRNA, helping in discrimination between self- and non-self. This Thermococcus onnurineus (strain NA1) protein is CRISPR system Cms protein Csm4.